Here is a 264-residue protein sequence, read N- to C-terminus: Phosphonoacetaldehyde hydrolase (264 aa).

Asp-9 functions as the Nucleophile in the catalytic mechanism. Residues Asp-9 and Ala-11 each contribute to the Mg(2+) site. Lys-50 serves as the catalytic Schiff-base intermediate with substrate. Asp-183 lines the Mg(2+) pocket.

It belongs to the HAD-like hydrolase superfamily. PhnX family. Homodimer. The cofactor is Mg(2+).

The catalysed reaction is phosphonoacetaldehyde + H2O = acetaldehyde + phosphate + H(+). Involved in phosphonate degradation. The polypeptide is Phosphonoacetaldehyde hydrolase (Bacillus cereus (strain ATCC 10987 / NRS 248)).